The chain runs to 346 residues: MIKVGIVGSTGYTGAELVRLLTRHPHVELVGLTSRSYVGEHYWRVYPHLKNYTDLQCEELDLPRLVDRADVLFTALPHGHSMDVAREVLSRGKKLVDLGADFRFRDQAVYESWYRVPHTAAELLPRAVYGLPEINREALRGADLVANPGCYPTASILGLAPLLAKGLIDPGEIVIDAKSGVSGAGRGFSLKTHFAETNENFQAYNVGVHRHTPEIEEQLGRLAGRDLTVAFTPHLVPMVRGILATIYTRPAVLPDRDELYELYADYYREEPFVRVLPPGMLPQTKAVAGTNHCDLAVVPDPRTGRVIVLSAIDNLMKGASGQAVQNLNLIFGLDETTGLVFPGLYP.

The active site involves cysteine 150.

Belongs to the NAGSA dehydrogenase family. Type 1 subfamily.

Its subcellular location is the cytoplasm. It carries out the reaction N-acetyl-L-glutamate 5-semialdehyde + phosphate + NADP(+) = N-acetyl-L-glutamyl 5-phosphate + NADPH + H(+). Its pathway is amino-acid biosynthesis; L-arginine biosynthesis; N(2)-acetyl-L-ornithine from L-glutamate: step 3/4. Catalyzes the NADPH-dependent reduction of N-acetyl-5-glutamyl phosphate to yield N-acetyl-L-glutamate 5-semialdehyde. The chain is N-acetyl-gamma-glutamyl-phosphate reductase from Desulforudis audaxviator (strain MP104C).